Here is a 37-residue protein sequence, read N- to C-terminus: Trypsin inhibitor 3 (37 aa).

Cystine bridges form between Cys-4–Cys-21, Cys-11–Cys-25, and Cys-20–Cys-36.

Functionally, trypsin inhibitor. The protein is Trypsin inhibitor 3 of Spinacia oleracea (Spinach).